Reading from the N-terminus, the 405-residue chain is Serine/threonine-protein kinase SSN3 (405 aa).

In terms of domain architecture, Protein kinase spans 40–350; the sequence is YEIIGYIAAG…ANDALLHPYF (311 aa). ATP-binding positions include 46–54 and Lys71; that span reads IAAGTYGRV. Catalysis depends on Asp173, which acts as the Proton acceptor. Residues 377–405 form a disordered region; sequence DSDIKTMTYQGTKRGSQGGDNLHPRKKQK. Over residues 381–391 the composition is skewed to polar residues; sequence KTMTYQGTKRG.

The protein belongs to the protein kinase superfamily. CMGC Ser/Thr protein kinase family. CDC2/CDKX subfamily. Component of the srb8-11 complex, a regulatory module of the Mediator complex. Mg(2+) is required as a cofactor.

The protein localises to the nucleus. The catalysed reaction is L-seryl-[protein] + ATP = O-phospho-L-seryl-[protein] + ADP + H(+). The enzyme catalyses L-threonyl-[protein] + ATP = O-phospho-L-threonyl-[protein] + ADP + H(+). It carries out the reaction [DNA-directed RNA polymerase] + ATP = phospho-[DNA-directed RNA polymerase] + ADP + H(+). Component of the srb8-11 complex. The srb8-11 complex is a regulatory module of the Mediator complex which is itself dependent transcription. The srb8-11 complex may be involved in the transcriptional repression of a subset of genes regulated by Mediator. It may inhibit the association of the Mediator complex with RNA polymerase II to form the holoenzyme complex. The srb8-11 complex phosphorylates the C-terminal domain (CTD) of the largest subunit of RNA polymerase II. This is Serine/threonine-protein kinase SSN3 (SSN3) from Yarrowia lipolytica (strain CLIB 122 / E 150) (Yeast).